The sequence spans 475 residues: 7-dehydrocholesterol reductase (475 aa).

The disordered stretch occupies residues 1 to 21 (MAAKSQPNIPKAKSLDGVTND). Phosphoserine is present on Ser-14. The next 6 helical transmembrane spans lie at 40 to 60 (LASV…FIMA), 154 to 174 (THLL…TIIF), 177 to 197 (WIPL…FAMV), 266 to 286 (VTNA…DFFW), 306 to 326 (LGWG…LYLV), and 331 to 351 (QLST…YYIF). NADP(+)-binding positions include Lys-358, Arg-362, Leu-395, Trp-400, and 407–408 (NY). The helical transmembrane segment at 420–440 (LACGGGHLLPYFYIIYMAILL) threads the bilayer. Residues Asp-447, 451–455 (CASKY), and Tyr-462 each bind NADP(+).

The protein belongs to the ERG4/ERG24 family. As to quaternary structure, interacts with DHCR24; this interaction regulates DHCR7 activity. Interacts with TMEM147. Widely expressed. Most abundant in adrenal gland, liver, testis, and brain.

The protein resides in the endoplasmic reticulum membrane. The catalysed reaction is cholesterol + NADP(+) = 7-dehydrocholesterol + NADPH + H(+). It carries out the reaction 7-dehydrodesmosterol + NADPH + H(+) = desmosterol + NADP(+). It catalyses the reaction 5,6alpha-epoxy-5alpha-cholestan-3beta-ol + H2O = 5alpha-cholestane-3beta,5,6beta-triol. The enzyme catalyses 5,6beta-epoxy-5beta-cholestan-3beta-ol + H2O = 5alpha-cholestane-3beta,5,6beta-triol. The protein operates within steroid biosynthesis; cholesterol biosynthesis. Its activity is regulated as follows. 7-DHC reductase and cholesterol-5,6-epoxide hydrolase (ChEH) activities are inhibited by tamoxifen and the selective AEBS ligand (4-benzyl-phenoxy)-ethyl-N-pyrrolidine (PBPE). ChEH activity is inhibited by oleic acid. In terms of biological role, oxidoreductase that catalyzes the last step of the cholesterol synthesis pathway, which transforms cholesta-5,7-dien-3beta-ol (7-dehydrocholesterol,7-DHC) into cholesterol by reducing the C7-C8 double bond of its sterol core. Can also metabolize cholesta-5,7,24-trien-3beta-ol (7-dehydrodemosterol, 7-DHD) to desmosterol, which is then metabolized by the Delta(24)-sterol reductase (DHCR24) to cholesterol. Modulates ferroptosis (a form of regulated cell death driven by iron-dependent lipid peroxidation) through the metabolic breakdown of the anti-ferroptotic metabolites 7-DHC and 7-DHD which, when accumulated, divert the propagation of peroxyl radical-mediated damage from phospholipid components to its sterol core, protecting plasma and mitochondrial membranes from phospholipid autoxidation. Its function is as follows. Component of the microsomal antiestrogen binding site (AEBS), a multiproteic complex at the ER membrane that consists of an association between cholestenol Delta-isomerase/EBP and DHCR7. This complex is responsible for cholesterol-5,6-epoxide hydrolase (ChEH) activity, which consists in the hydration of cholesterol-5,6-epoxides (5,6-EC) into cholestane-3beta,5alpha,6beta-triol (CT). The precise role of each component of this complex has not been described yet. The protein is 7-dehydrocholesterol reductase of Homo sapiens (Human).